Here is a 199-residue protein sequence, read N- to C-terminus: NADH-quinone oxidoreductase subunit C (199 aa).

The protein belongs to the complex I 30 kDa subunit family. In terms of assembly, NDH-1 is composed of 14 different subunits. Subunits NuoB, C, D, E, F, and G constitute the peripheral sector of the complex.

It is found in the cell inner membrane. It catalyses the reaction a quinone + NADH + 5 H(+)(in) = a quinol + NAD(+) + 4 H(+)(out). NDH-1 shuttles electrons from NADH, via FMN and iron-sulfur (Fe-S) centers, to quinones in the respiratory chain. The immediate electron acceptor for the enzyme in this species is believed to be ubiquinone. Couples the redox reaction to proton translocation (for every two electrons transferred, four hydrogen ions are translocated across the cytoplasmic membrane), and thus conserves the redox energy in a proton gradient. In Rhodobacter capsulatus (Rhodopseudomonas capsulata), this protein is NADH-quinone oxidoreductase subunit C.